A 351-amino-acid chain; its full sequence is Circumsporozoite protein (351 aa).

The N-terminal stretch at 1–22 (MKNFILLAVSSILLVDLLPTHF) is a signal peptide. Residues 50-266 (AQVRQSASRG…GQNNQGANVP (217 aa)) are disordered. Residues 61–96 (GLGEKPKEGADKEKKKEKEKEKEEEPKKPNENKLKQ) are compositionally biased toward basic and acidic residues. The interval 80-88 (KEKEEEPKK) is required for the binding to heparan sulfate proteoglycans (HSPGs) on the surface of host hepatocytes. The segment at 93–97 (KLKQP) is region I; contains the proteolytic cleavage site. The span at 97 to 219 (PEQPAAGAGG…AGARGEQPAA (123 aa)) shows a compositional bias: low complexity. Tandem repeats lie at residues 101 to 109 (AAGAGGEQP), 110 to 118 (AAGAGGEQP), 119 to 127 (AAGAGGEQP), 128 to 136 (AAGARGEQP), 137 to 145 (AAGAGGEQP), 146 to 154 (AAGAGGEQP), 155 to 163 (AAGAGGEQP), 164 to 172 (AAGAGGEQP), 173 to 181 (AAGAGGEQP), 182 to 190 (AAGARGEQP), 191 to 199 (AAGAGGEQP), 200 to 208 (AAGAGGEQP), 209 to 217 (AAGARGEQP), and 218 to 226 (AAGAGGEQP). Positions 101–226 (AAGAGGEQPA…PAAGAGGEQP (126 aa)) are 14 X 9 AA tandem repeats of A-A-G-A-[GR]-G-E-Q-P. Positions 244 to 256 (GARGGNAGAGKGQ) are enriched in gly residues. The TSP type-1 domain occupies 277 to 329 (KIRSSVTTEWTPCSVTCGNGVRIRRKGHAGNKKAEDLTMDDLEVEACVMDKCA). Intrachain disulfides connect Cys289–Cys323 and Cys293–Cys328. An O-linked (Fuc) threonine glycan is attached at Thr292. The GPI-anchor amidated cysteine moiety is linked to residue Cys328. Residues 329-351 (AGIFNVVSNSLGLVILLVLALFN) constitute a propeptide, removed in mature form.

This sequence belongs to the plasmodium circumsporozoite protein family. In terms of processing, during host cell invasion, proteolytically cleaved at the cell membrane in the region I by a papain-like cysteine protease of parasite origin. Cleavage is triggered by the sporozoite contact with highly sulfated heparan sulfate proteoglycans (HSPGs) present on the host hepatocyte cell surface. Cleavage exposes the TSP type-1 (TSR) domain and is required for productive invasion of host hepatocytes but not for adhesion to the host cell membrane. Cleavage is dispensable for sporozoite development in the oocyst, motility and for traversal of host and vector cells. Post-translationally, O-glycosylated; maybe by POFUT2.

It localises to the cell membrane. Its subcellular location is the cytoplasm. Its function is as follows. Essential sporozoite protein. In the mosquito vector, required for sporozoite development in the oocyst, migration through the vector hemolymph and entry into the vector salivary glands. In the vertebrate host, required for sporozoite migration through the host dermis and infection of host hepatocytes. Binds to highly sulfated heparan sulfate proteoglycans (HSPGs) on the surface of host hepatocytes. In terms of biological role, in the vertebrate host, binds to highly sulfated heparan sulfate proteoglycans (HSPGs) on the surface of host hepatocytes and is required for sporozoite invasion of the host hepatocytes. This Plasmodium knowlesi (strain nuri) protein is Circumsporozoite protein.